Consider the following 415-residue polypeptide: Plasminogen activator inhibitor 2 (415 aa).

Cys5 and Cys405 are disulfide-bonded. N-linked (GlcNAc...) asparagine glycosylation is found at Asn75, Asn115, and Asn339.

This sequence belongs to the serpin family. Ov-serpin subfamily. As to quaternary structure, interacts with PSMB1. Post-translationally, the signal sequence is not cleaved.

The protein resides in the cytoplasm. It localises to the secreted. Its subcellular location is the extracellular space. Its function is as follows. Inhibits urokinase-type plasminogen activator. The monocyte derived PAI-2 is distinct from the endothelial cell-derived PAI-1. The polypeptide is Plasminogen activator inhibitor 2 (SERPINB2) (Homo sapiens (Human)).